Reading from the N-terminus, the 795-residue chain is Copper-exporting P-type ATPase (795 aa).

2 HMA domains span residues 5–70 (QNAT…YDVV) and 72–138 (DKAE…YDAQ). 4 residues coordinate Cu(+): Cys16, Cys19, Cys83, and Cys86. A run of 6 helical transmembrane segments spans residues 161 to 181 (LMISTILSLPLLMTMLVHLFN), 187 to 207 (ILMNPWFQFILATPIQFIIGW), 224 to 244 (MDVLVALGTSAAYFYSIYEMI), 256 to 276 (LYFETSAVLITLILFGKYLEA), 412 to 432 (YFVPIVIAIALLTFLIWITLV), and 440 to 460 (ALVAAISVLVIACPCALGLAT). The active-site 4-aspartylphosphate intermediate is Asp496. Mg(2+) is bound by residues Asp690 and Asp694. 2 helical membrane-spanning segments follow: residues 747–764 (NLFWAFGYNIAGIPIAAM) and 770–788 (WIAGAAMALSSVSVVSNAL).

The protein belongs to the cation transport ATPase (P-type) (TC 3.A.3) family. Type IB subfamily.

Its subcellular location is the cell membrane. It carries out the reaction Cu(+)(in) + ATP + H2O = Cu(+)(out) + ADP + phosphate + H(+). In terms of biological role, involved in copper export. This Staphylococcus haemolyticus (strain JCSC1435) protein is Copper-exporting P-type ATPase (copA).